We begin with the raw amino-acid sequence, 130 residues long: Phosphoribosyl-AMP cyclohydrolase (130 aa).

Asp-74 contacts Mg(2+). A Zn(2+)-binding site is contributed by Cys-75. The Mg(2+) site is built by Asp-76 and Asp-78. 2 residues coordinate Zn(2+): Cys-91 and Cys-98.

The protein belongs to the PRA-CH family. Homodimer. Mg(2+) serves as cofactor. It depends on Zn(2+) as a cofactor.

Its subcellular location is the cytoplasm. The catalysed reaction is 1-(5-phospho-beta-D-ribosyl)-5'-AMP + H2O = 1-(5-phospho-beta-D-ribosyl)-5-[(5-phospho-beta-D-ribosylamino)methylideneamino]imidazole-4-carboxamide. Its pathway is amino-acid biosynthesis; L-histidine biosynthesis; L-histidine from 5-phospho-alpha-D-ribose 1-diphosphate: step 3/9. In terms of biological role, catalyzes the hydrolysis of the adenine ring of phosphoribosyl-AMP. This is Phosphoribosyl-AMP cyclohydrolase from Bradyrhizobium sp. (strain ORS 278).